The following is a 543-amino-acid chain: Aluminum-activated malate transporter 14 (543 aa).

Helical transmembrane passes span 56–76 (VGVS…FKGI), 80–100 (AIWA…ATLC), 106–126 (GLGT…ANDS), 129–149 (IFRA…ITYL), 164–184 (LIFL…DTVI), and 191–211 (FYTI…VFPI). The tract at residues 416–438 (DTNEAASYQNTGTPRGERMSRFG) is disordered. Positions 419–428 (EAASYQNTGT) are enriched in polar residues. Residues 445–472 (RLRADTLERRSAAATNERKILRQQLSRI) are a coiled coil.

The protein belongs to the aromatic acid exporter (TC 2.A.85) family.

Its subcellular location is the membrane. Functionally, malate transporter. The chain is Aluminum-activated malate transporter 14 (ALMT14) from Arabidopsis thaliana (Mouse-ear cress).